Reading from the N-terminus, the 397-residue chain is MRSIMENLIKNNPTIAIVAGEVSGDILGGGLIKALKVKYPQARFVGIAGKNMLAESCESLVDIEEIAVMGLVEILKHLPRLLKIRSDIVQKLSALKPDIFIGIDSPEFNLYVEDRLKAQGIKTIHYVSPSVWAWRQNRIYKIAKATNLVLAFLPFEKAFYDRFNVPCRFIGHTMADAIPLNPNRTEACKMLNIDENQRYVAILAGSRGSEVEFLAEPFLQTAQLLKRKYPDLKFLVPLVNEKRRRQFEQVKAKVAPELDLILLDGHGRQAMIAAQATLLASGTAALECMLCKSPMVVGYRMKAATYWLAKRLVKTAYISLPNLLADEMLVPEMIQDECTPEKLVEKLSVYLDETESAVQNRQVLIQRFTELHQLIQCDADSQAAQAVADLLEGKVNG.

It belongs to the LpxB family.

The enzyme catalyses a lipid X + a UDP-2-N,3-O-bis[(3R)-3-hydroxyacyl]-alpha-D-glucosamine = a lipid A disaccharide + UDP + H(+). Its pathway is bacterial outer membrane biogenesis; LPS lipid A biosynthesis. Functionally, condensation of UDP-2,3-diacylglucosamine and 2,3-diacylglucosamine-1-phosphate to form lipid A disaccharide, a precursor of lipid A, a phosphorylated glycolipid that anchors the lipopolysaccharide to the outer membrane of the cell. The polypeptide is Lipid-A-disaccharide synthase (Mannheimia succiniciproducens (strain KCTC 0769BP / MBEL55E)).